A 237-amino-acid polypeptide reads, in one-letter code: N-(5'-phosphoribosyl)anthranilate isomerase (237 aa).

Belongs to the TrpF family.

The enzyme catalyses N-(5-phospho-beta-D-ribosyl)anthranilate = 1-(2-carboxyphenylamino)-1-deoxy-D-ribulose 5-phosphate. It functions in the pathway amino-acid biosynthesis; L-tryptophan biosynthesis; L-tryptophan from chorismate: step 3/5. The chain is N-(5'-phosphoribosyl)anthranilate isomerase from Desulfitobacterium hafniense (strain Y51).